We begin with the raw amino-acid sequence, 102 residues long: Small ribosomal subunit protein uS10 (102 aa).

The protein belongs to the universal ribosomal protein uS10 family. In terms of assembly, part of the 30S ribosomal subunit.

Functionally, involved in the binding of tRNA to the ribosomes. The protein is Small ribosomal subunit protein uS10 of Acidiphilium cryptum (strain JF-5).